The sequence spans 709 residues: Probable serine/threonine-protein kinase zyg-1 (709 aa).

A Protein kinase domain is found at 13-251; that stretch reads FQNLQQIGQG…LKEIVMTDYV (239 aa). ATP contacts are provided by residues 19-27 and Lys41; that span reads IGQGGFGVV. Asp130 functions as the Proton acceptor in the catalytic mechanism. 2 disordered regions span residues 254–329 and 591–633; these read KMGE…DRAR and SSSQ…PAAT. Composition is skewed to basic and acidic residues over residues 262-291 and 302-313; these read SREHSRDSRSQRSREPFRSSRDGISLERRP and SRRDPDGYRAAH. A compositionally biased stretch (polar residues) spans 607-627; the sequence is PLSSRTTSSLNVRNGVSSDEN.

The protein belongs to the protein kinase superfamily. Ser/Thr protein kinase family.

It localises to the cytoplasm. The protein resides in the cytoskeleton. Its subcellular location is the microtubule organizing center. It is found in the centrosome. The protein localises to the centriole. The catalysed reaction is L-seryl-[protein] + ATP = O-phospho-L-seryl-[protein] + ADP + H(+). The enzyme catalyses L-threonyl-[protein] + ATP = O-phospho-L-threonyl-[protein] + ADP + H(+). Protein kinase that plays a central role in centrosome duplication. Paternal copy is required to regulate synthesis of daughter centrioles prior to fertilization. Maternal copy regulates centrosome duplication during later cell cycles. Functions upstream of sas-5 and sas-6, and is required for their localization to the centrosome. The chain is Probable serine/threonine-protein kinase zyg-1 (zyg-1) from Caenorhabditis briggsae.